The following is a 419-amino-acid chain: MEEREGTNINNIPTSFGLKQHETPLPPPGYPPRSENPNLFPVGQSSTSSAAAAVKPSENVAPPFSLTMPVENSSSELKKKRGRPRKYNPDGSLAVTLSPMPISSSVPLTSEFGSRKRGRGRGRGRGRGRGRGQGQGSREPNNNNNDNNWLKNPQMFEFNNNTPTSGGGGPAEIVSPSFTPHVLTVNAGEDVTMKIMTFSQQGSRAICILSANGPISNVTLRQSMTSGGTLTYEGHFEILSLTGSFIPSESGGTRSRAGGMSVSLAGQDGRVFGGGLAGLFIAAGPVQVMVGSFIAGQEESQQQQQQIKKQRRERLGIPTTTQASNISFGGSAEDPKARYGLNKPVVIQPPPVSAPPVSFSHEPSTNTVHGYYANNTANHIKDLFSSLPGEDREEDEDDLEGEDDEEFGGHSESDTEVPS.

3 disordered regions span residues Met-1–Gly-168, Gln-301–Ala-337, and Asp-382–Ser-419. The short motif at Lys-78–Lys-86 is the Bipartite nuclear localization signal element. Residues Lys-78 to Asp-90 constitute a DNA-binding region (a.T hook). A compositionally biased stretch (polar residues) spans Pro-101–Phe-112. Over residues Arg-115–Gly-130 the composition is skewed to basic residues. Positions Gly-136–Asn-148 are enriched in low complexity. Positions Val-174–Arg-314 constitute a PPC domain. The segment covering Pro-318–Phe-328 has biased composition (polar residues). Residues Asp-391–Glu-406 show a composition bias toward acidic residues.

As to quaternary structure, homodimer. Interacts with AHL3. Predominantly expressed in the stele of the root meristem with a specificity to the procambium.

It localises to the nucleus. Transcription factor that specifically binds AT-rich DNA sequences related to the nuclear matrix attachment regions (MARs). Acts redundantly with AHL3 to regulate the formation of tissue boundary between the xylem and procambium in the root meristem. Cell-to-cell movement of AHL4 from the procambium to the xylem is critical for its function in root vascular patterning. The protein is AT-hook motif nuclear-localized protein 4 of Arabidopsis thaliana (Mouse-ear cress).